The following is a 370-amino-acid chain: Protein PELPK1 (370 aa).

The N-terminal stretch at 1–34 (MALMKKSLSAALLSSPLLIICLIALLADPFSVGA) is a signal peptide. Tandem repeats lie at residues 43 to 47 (PEIPK), 49 to 53 (PELPK), 54 to 58 (FEVPK), 60 to 64 (PEFPK), 65 to 69 (PELPK), 71 to 75 (PEFPK), 76 to 80 (PELPK), 82 to 86 (PEIPK), 87 to 91 (PELPK), 93 to 97 (PEIPK), 98 to 102 (PEETK), 104 to 108 (PDIPK), 109 to 113 (LELPK), 115 to 119 (PEIPK), 120 to 124 (PELPK), 126 to 130 (PEIPK), 131 to 135 (PELPK), 137 to 141 (PEIQK), 142 to 146 (PELPK), 148 to 152 (PEIPK), 153 to 157 (PELPK), 159 to 163 (PEIPK), 164 to 168 (PDLPK), 175 to 179 (PEVPK), 186 to 190 (PEAPK), 192 to 196 (PEIPK), 197 to 201 (PELPK), 203 to 207 (PEVPK), 214 to 218 (PEIQK), 219 to 223 (PELPK), 225 to 229 (PELPK), 231 to 235 (PEIQK), 236 to 240 (PELPK), 242 to 246 (PEVPK), 247 to 251 (LEAPK), 253 to 257 (PEIQK), 258 to 262 (PELPK), 264 to 268 (PELPK), 270 to 274 (PEIQK), 275 to 279 (PELPK), 281 to 285 (PEIQK), 286 to 290 (PELPK), 292 to 296 (PEVPK), 303 to 307 (PEVPK), 314 to 318 (PEIPK), 319 to 323 (PELPK), 325 to 329 (PEVPK), 330 to 334 (PELPK), 336 to 340 (PEITK), 344 to 348 (PEIPK), 355 to 359 (PQLPK), and 361 to 365 (PEFPK). A 52 X 5 AA tandem repeat of P-[DEGQ]-[AEFLIV]-[QPT]-K region spans residues 43–365 (PEIPKLPELP…QLPKLPEFPK (323 aa)). Residues 65 to 223 (PELPKLPEFP…PEIQKPELPK (159 aa)) are compositionally biased toward basic and acidic residues. A disordered region spans residues 65–370 (PELPKLPEFP…PEFPKVPGTP (306 aa)). The segment covering 232 to 262 (EIQKPELPKLPEVPKLEAPKVPEIQKPELPK) has biased composition (basic and acidic residues). Composition is skewed to basic and acidic residues over residues 271–296 (EIQK…EVPK) and 306–334 (PKSE…ELPK).

The protein resides in the secreted. It localises to the cell wall. In terms of biological role, positive regulator of germination and plant growth. The sequence is that of Protein PELPK1 from Arabidopsis thaliana (Mouse-ear cress).